Here is a 449-residue protein sequence, read N- to C-terminus: BPI fold-containing family B member 6 (449 aa).

Positions 1 to 18 (MLCSLSLVLCGLLAGTRA) are cleaved as a signal peptide. An N-linked (GlcNAc...) asparagine glycan is attached at Asn115. Cys138 and Cys172 are oxidised to a cystine.

Belongs to the BPI/LBP/Plunc superfamily. BPI/LBP family.

The protein localises to the secreted. This Mus musculus (Mouse) protein is BPI fold-containing family B member 6 (Bpifb6).